We begin with the raw amino-acid sequence, 350 residues long: Biotin synthase (350 aa).

The Radical SAM core domain maps to 41–268; the sequence is NEVQISRLLS…KSRVRLSAGR (228 aa). Cys-56, Cys-60, and Cys-63 together coordinate [4Fe-4S] cluster. Residues Cys-100, Cys-131, Cys-191, and Arg-263 each coordinate [2Fe-2S] cluster.

Belongs to the radical SAM superfamily. Biotin synthase family. As to quaternary structure, homodimer. [4Fe-4S] cluster serves as cofactor. Requires [2Fe-2S] cluster as cofactor.

It carries out the reaction (4R,5S)-dethiobiotin + (sulfur carrier)-SH + 2 reduced [2Fe-2S]-[ferredoxin] + 2 S-adenosyl-L-methionine = (sulfur carrier)-H + biotin + 2 5'-deoxyadenosine + 2 L-methionine + 2 oxidized [2Fe-2S]-[ferredoxin]. Its pathway is cofactor biosynthesis; biotin biosynthesis; biotin from 7,8-diaminononanoate: step 2/2. Its function is as follows. Catalyzes the conversion of dethiobiotin (DTB) to biotin by the insertion of a sulfur atom into dethiobiotin via a radical-based mechanism. This Shewanella sp. (strain ANA-3) protein is Biotin synthase.